Consider the following 691-residue polypeptide: Protein-glutamine gamma-glutamyltransferase E (691 aa).

Tyr110 bears the Phosphotyrosine mark. Position 111 is a phosphothreonine (Thr111). Positions 221, 224, 226, and 227 each coordinate Ca(2+). Cys272 is an active-site residue. The Ca(2+) site is built by Asp301, Asp303, Asn305, Ser307, and Asp324. Catalysis depends on residues His330 and Asp353. Ca(2+) is bound by residues Asn393, Thr414, Glu442, and Glu447.

Belongs to the transglutaminase superfamily. Transglutaminase family. Consists of two polypeptide chains, which are synthesized as a precursor form of a single polypeptide. Ca(2+) serves as cofactor. In terms of processing, activated by proteolytic processing. In vitro activation is commonly achieved by cleavage with dispase, a neutral bacterial protease. Physiological activation may be catalyzed by CTSL and, to a lesser extent, by CTSS.

It localises to the cytoplasm. It carries out the reaction L-glutaminyl-[protein] + L-lysyl-[protein] = [protein]-L-lysyl-N(6)-5-L-glutamyl-[protein] + NH4(+). Functionally, catalyzes the calcium-dependent formation of isopeptide cross-links between glutamine and lysine residues in various proteins, as well as the conjugation of polyamines to proteins. Involved in the formation of the cornified envelope (CE), a specialized component consisting of covalent cross-links of proteins beneath the plasma membrane of terminally differentiated keratinocytes. Catalyzes small proline-rich proteins and LOR cross-linking to form small interchain oligomers, which are further cross-linked by TGM1 onto the growing CE scaffold. In hair follicles, involved in cross-linking structural proteins to hardening the inner root sheath. The polypeptide is Protein-glutamine gamma-glutamyltransferase E (TGM3) (Bos taurus (Bovine)).